The chain runs to 167 residues: 3-dehydroquinate dehydratase (167 aa).

Residue Tyr22 is the Proton acceptor of the active site. Substrate contacts are provided by Asn76, His82, and Asp89. The active-site Proton donor is His102. Substrate is bound by residues 103–104 (LT) and Arg113.

The protein belongs to the type-II 3-dehydroquinase family. As to quaternary structure, homododecamer.

The catalysed reaction is 3-dehydroquinate = 3-dehydroshikimate + H2O. It functions in the pathway metabolic intermediate biosynthesis; chorismate biosynthesis; chorismate from D-erythrose 4-phosphate and phosphoenolpyruvate: step 3/7. In terms of biological role, catalyzes a trans-dehydration via an enolate intermediate. The polypeptide is 3-dehydroquinate dehydratase (Helicobacter pylori (strain Shi470)).